Here is a 275-residue protein sequence, read N- to C-terminus: Collectin-10 (275 aa).

A signal peptide spans 1-25 (MKYGKLWPIGVSVLGVIALHVRVLS). The N-linked (GlcNAc...) asparagine glycan is linked to Asn-30. A disordered region spans residues 39 to 76 (THTILPGPKGDDGEAGDTGVLGKLGKDGPKGQKGNKGI). Residues 51–110 (GEAGDTGVLGKLGKDGPKGQKGNKGIIGDSGDLGLIGKIGPIGSKGDKGHKGLPGLPGGK) enclose the Collagen-like domain. The C-type lectin domain occupies 153–269 (TDEKYYYIVR…CSLTIYFVCE (117 aa)). Intrachain disulfides connect Cys-174–Cys-268 and Cys-246–Cys-260.

It belongs to the COLEC10/COLEC11 family.

It is found in the secreted. Its function is as follows. Lectin that binds to various sugars: galactose &gt; mannose = fucose &gt; N-acetylglucosamine &gt; N-acetylgalactosamine. This chain is Collectin-10 (colec10), found in Xenopus tropicalis (Western clawed frog).